Reading from the N-terminus, the 729-residue chain is Catalase-peroxidase 1 (729 aa).

The tryptophyl-tyrosyl-methioninium (Trp-Tyr) (with M-252) cross-link spans 98–226; sequence WHSAGSYRIA…LAAVMMGLIY (129 aa). The active-site Proton acceptor is His-99. The tryptophyl-tyrosyl-methioninium (Tyr-Met) (with W-98) cross-link spans 226–252; sequence YVNPEGVDGNPDPLRTAKDIRETFARM. Residue His-267 participates in heme b binding.

Belongs to the peroxidase family. Peroxidase/catalase subfamily. As to quaternary structure, homodimer or homotetramer. Requires heme b as cofactor. In terms of processing, formation of the three residue Trp-Tyr-Met cross-link is important for the catalase, but not the peroxidase activity of the enzyme.

The enzyme catalyses H2O2 + AH2 = A + 2 H2O. It catalyses the reaction 2 H2O2 = O2 + 2 H2O. Its function is as follows. Bifunctional enzyme with both catalase and broad-spectrum peroxidase activity. The protein is Catalase-peroxidase 1 of Cellvibrio japonicus (strain Ueda107) (Pseudomonas fluorescens subsp. cellulosa).